The following is a 1041-amino-acid chain: Desmoglein-4 (1041 aa).

A signal peptide spans 1 to 23 (MDWLLFRNICLLILFMVVLGVNS). Residues 24-49 (EFIVEVKELDIENGTTTWQTVRRQKR) constitute a propeptide that is removed on maturation. 4 Cadherin domains span residues 50 to 157 (EWIK…PPVF), 158 to 269 (TQNV…FPIL), 270 to 385 (EKTS…GPTF), and 389 to 497 (SMTF…CPVI). The Extracellular portion of the chain corresponds to 50–634 (EWIKFAAACR…RQSNVGLGPA (585 aa)). N110 carries an N-linked (GlcNAc...) asparagine glycan. N-linked (GlcNAc...) asparagine glycosylation occurs at N545. A helical membrane pass occupies residues 635–655 (GIGMIILGLLLLLLSPLLLLM). The Cytoplasmic segment spans residues 656-1041 (CCCKRRQPEG…RYSNMHYSRQ (386 aa)). 2 Desmoglein repeat repeats span residues 884 to 910 (TLSE…IVTE) and 911 to 941 (TYTT…ETVM). Residues 1014–1041 (ISQTTGSTSPMTSQHRVTRYSNMHYSRQ) are disordered.

As to quaternary structure, interacts with JUP. In terms of tissue distribution, strongly expressed in the skin; during the anagen stage of hair follicles in the matrix, precortex and inner rooth sheath.

It is found in the cell membrane. The protein localises to the cell junction. Its subcellular location is the desmosome. Functionally, a component of desmosome cell-cell junctions which are required for positive regulation of cellular adhesion. Coordinates the transition from proliferation to differentiation in hair follicle keratinocytes. Plays a role in moderating lymphocyte migration to inflamed skin and maintaining homeostasis of the epidermal inflammatory response. This chain is Desmoglein-4 (Dsg4), found in Mus musculus (Mouse).